We begin with the raw amino-acid sequence, 598 residues long: Probable translation initiation factor IF-2 (598 aa).

The 223-residue stretch at 3-225 folds into the tr-type G domain; sequence LRCPIVSVLG…GLAQKFLEQK (223 aa). Residues 12–19 are G1; the sequence is GHVDHGKT. 12-19 contacts GTP; it reads GHVDHGKT. A G2 region spans residues 37 to 41; it reads GITQH. The G3 stretch occupies residues 76–79; the sequence is DTPG. GTP is bound by residues 76–80 and 130–133; these read DTPGH and NKLD. A G4 region spans residues 130 to 133; sequence NKLD. Residues 200–202 form a G5 region; that stretch reads SAM.

This sequence belongs to the TRAFAC class translation factor GTPase superfamily. Classic translation factor GTPase family. IF-2 subfamily.

In terms of biological role, function in general translation initiation by promoting the binding of the formylmethionine-tRNA to ribosomes. Seems to function along with eIF-2. This Methanococcus maripaludis (strain C6 / ATCC BAA-1332) protein is Probable translation initiation factor IF-2.